The sequence spans 183 residues: NAD(P)H-quinone oxidoreductase subunit I, chloroplastic (183 aa).

4Fe-4S ferredoxin-type domains follow at residues 55–84 (GRIHFEFDKCIACEVCVRVCPINLPVVDWE) and 95–124 (TSYSIDFGVCIFCGNCVEYCPTNCLSMTEE). [4Fe-4S] cluster contacts are provided by cysteine 64, cysteine 67, cysteine 70, cysteine 74, cysteine 104, cysteine 107, cysteine 110, and cysteine 114.

Belongs to the complex I 23 kDa subunit family. NDH is composed of at least 16 different subunits, 5 of which are encoded in the nucleus. Requires [4Fe-4S] cluster as cofactor.

It is found in the plastid. Its subcellular location is the chloroplast thylakoid membrane. The enzyme catalyses a plastoquinone + NADH + (n+1) H(+)(in) = a plastoquinol + NAD(+) + n H(+)(out). It carries out the reaction a plastoquinone + NADPH + (n+1) H(+)(in) = a plastoquinol + NADP(+) + n H(+)(out). NDH shuttles electrons from NAD(P)H:plastoquinone, via FMN and iron-sulfur (Fe-S) centers, to quinones in the photosynthetic chain and possibly in a chloroplast respiratory chain. The immediate electron acceptor for the enzyme in this species is believed to be plastoquinone. Couples the redox reaction to proton translocation, and thus conserves the redox energy in a proton gradient. In Huperzia lucidula (Shining clubmoss), this protein is NAD(P)H-quinone oxidoreductase subunit I, chloroplastic.